Reading from the N-terminus, the 412-residue chain is NF-kappa-B essential modulator (412 aa).

Positions 1-48 are disordered; it reads MSRHLWKNQLSEMVQPSGGPAEDQDMLGEESSLGKPAMLHLPSEQGTP. Residues 1-197 are required for interaction with and ubiquitination by MARCHF2; sequence MSRHLWKNQL…REVLQQQHSV (197 aa). Phosphoserine; by IKKB occurs at positions 31 and 43. An interaction with CHUK/IKBKB region spans residues 44-111; sequence EQGTPETLQR…KLVERLSLEK (68 aa). Positions 49–343 form a coiled coil; sequence ETLQRCLEEN…NKLKVGCHES (295 aa). Residue Ser-68 is modified to Phosphoserine. A Phosphoserine; by ATM modification is found at Ser-85. Residues Lys-111, Lys-139, Lys-143, Lys-226, and Lys-246 each participate in a glycyl lysine isopeptide (Lys-Gly) (interchain with G-Cter in ubiquitin) cross-link. The segment at 150 to 250 is interaction with TANK; that stretch reads LGELQESQSR…YDSHIKSSKG (101 aa). Residues 242-343 form a ubiquitin-binding (UBAN) region; it reads DSHIKSSKGM…NKLKVGCHES (102 aa). The interval 246-358 is self-association; it reads KSSKGMQLED…MRKRHVETSQ (113 aa). The segment at 249–412 is required for interaction with TNFAIP3; it reads KGMQLEDLRQ…LQIHVMECIE (164 aa). Residue Lys-270 forms a Glycyl lysine isopeptide (Lys-Gly) (interchain with G-Cter in SUMO); alternate linkage. Residue Lys-270 forms a Glycyl lysine isopeptide (Lys-Gly) (interchain with G-Cter in ubiquitin); alternate linkage. Residues Lys-276, Lys-278, Lys-285, and Lys-295 each participate in a glycyl lysine isopeptide (Lys-Gly) (interchain with G-Cter in ubiquitin) cross-link. Residue Lys-302 forms a Glycyl lysine isopeptide (Lys-Gly) (interchain with G-Cter in SUMO); alternate linkage. Lys-302 is covalently cross-linked (Glycyl lysine isopeptide (Lys-Gly) (interchain with G-Cter in ubiquitin); alternate). Residues Lys-314 and Lys-319 each participate in a glycyl lysine isopeptide (Lys-Gly) (interchain with G-Cter in ubiquitin) cross-link. The tract at residues 315-336 is leucine-zipper; that stretch reads LVERKELLQEQLEQLQREFNKL. Position 369 is a phosphoserine; by IKKB (Ser-369). The interaction with CYLD stretch occupies residues 375 to 412; it reads SNQRRSPPEEPPDFCCPKCQYQAPDMDTLQIHVMECIE. Ser-380 carries the phosphoserine modification. The CCHC NOA-type zinc-finger motif lies at 382–412; that stretch reads PEEPPDFCCPKCQYQAPDMDTLQIHVMECIE. Residue Cys-390 coordinates Zn(2+). Residue Lys-392 forms a Glycyl lysine isopeptide (Lys-Gly) (interchain with G-Cter in ubiquitin) linkage. Positions 393, 406, and 410 each coordinate Zn(2+).

As to quaternary structure, homodimer; disulfide-linked. Component of the I-kappa-B-kinase (IKK) core complex consisting of CHUK, IKBKB and IKBKG; probably four alpha/CHUK-beta/IKBKB dimers are associated with four gamma/IKBKG subunits. The IKK core complex seems to associate with regulatory or adapter proteins to form a IKK-signalosome holo-complex. The IKK complex associates with TERF2IP/RAP1, leading to promote IKK-mediated phosphorylation of RELA/p65. Part of a complex composed of NCOA2, NCOA3, CHUK/IKKA, IKBKB, IKBKG and CREBBP. Interacts with COPS3, CYLD, NALP2, TRPC4AP and PIDD1. Interacts with ATM; the complex is exported from the nucleus. Interacts with TRAF6. Interacts with IKBKE. Interacts with TANK; the interaction is enhanced by IKBKE and TBK1. Part of a ternary complex consisting of TANK, IKBKB and IKBKG. Interacts with ZFAND5. Interacts with RIPK2. Interacts with TNIP1 and TNFAIP3; TNIP1 facilitates the TNFAIP3-mediated de-ubiquitination of IKBKG. Interacts with TNFAIP3; the interaction is induced by TNF stimulation and by polyubiquitin. Binds (via UBAN region) polyubiquitin; binds both 'Lys-63'-linked and linear polyubiquitin, with higher affinity for linear ubiquitin. Interacts with NLRP10. Interacts with TANK; this interaction increases in response to DNA damage. Interacts with USP10; this interaction increases in response to DNA damage. Interacts with ZC3H12A; this interaction increases in response to DNA damage. Interacts with IFIT5; the interaction synergizes the recruitment of IKK to MAP3K7 and enhances IKK phosphorylation. Interacts with TRIM29; this interaction induces IKBKG/NEMO ubiquitination and proteolytic degradation. Interacts with TRIM13; this interaction leads to IKBKG/NEMO ubiquitination. Interacts with ARFIP2. Interacts with RIPK1. Interacts with (ubiquitinated) BCL10; interaction with polyubiquitinated BCL10 via both 'Lys-63'-linked and linear ubiquitin is required for TCR-induced NF-kappa-B activation. Interacts with MARCHF2; during the late stages of macrophage viral and bacterial infection; the interaction leads to ubiquitination and degradation of IKBKG/NEMO. Phosphorylation at Ser-68 attenuates aminoterminal homodimerization. Post-translationally, polyubiquitinated on Lys-278 via 'Lys-63'-linked ubiquitin; the ubiquitination is mediated downstream of NOD2 and RIPK2 and probably plays a role in signaling by facilitating interactions with ubiquitin domain-containing proteins and activates the NF-kappa-B pathway. Polyubiquitinated on Lys-278 and Lys-302 through 'Lys-63'-linked ubiquitin; the ubiquitination is mediated by BCL10, MALT1 and TRAF6 and probably plays a role in signaling by facilitating interactions with ubiquitin domain-containing proteins and activates the NF-kappa-B pathway. Monoubiquitinated on Lys-270 and Lys-302; promotes nuclear export. Polyubiquitinated through 'Lys-27' by TRIM23; involved in antiviral innate and inflammatory responses. Linear polyubiquitinated on Lys-111, Lys-143, Lys-226, Lys-246, Lys-270, Lys-278, Lys-285, Lys-295, Lys-302 and Lys-319; the head-to-tail polyubiquitination is mediated by the LUBAC complex and plays a key role in NF-kappa-B activation. Deubiquitinated by USP10 in a TANK-dependent and -independent manner, leading to the negative regulation of NF-kappa-B signaling upon DNA damage. Ubiquitinated at Lys-319 by MARCHF2 following bacterial and viral infection which leads to its degradation. Polyubiquitinated via 'Lys-29'-linked ubiquitin; leading to lysosomal degradation. In terms of processing, sumoylated on Lys-270 and Lys-302 with SUMO1; the modification results in phosphorylation of Ser-85 by ATM leading to a replacement of the sumoylation by mono-ubiquitination on these residues. Neddylated by TRIM40, resulting in stabilization of NFKBIA and down-regulation of NF-kappa-B activity.

It localises to the cytoplasm. Its subcellular location is the nucleus. Functionally, regulatory subunit of the IKK core complex which phosphorylates inhibitors of NF-kappa-B thus leading to the dissociation of the inhibitor/NF-kappa-B complex and ultimately the degradation of the inhibitor. Its binding to scaffolding polyubiquitin plays a key role in IKK activation by multiple signaling receptor pathways. Can recognize and bind both 'Lys-63'-linked and linear polyubiquitin upon cell stimulation, with a much highr affinity for linear polyubiquitin. Could be implicated in NF-kappa-B-mediated protection from cytokine toxicity. Essential for viral activation of IRF3. Involved in TLR3- and IFIH1-mediated antiviral innate response; this function requires 'Lys-27'-linked polyubiquitination. This is NF-kappa-B essential modulator (Ikbkg) from Rattus norvegicus (Rat).